The following is a 317-amino-acid chain: Melanocyte-stimulating hormone receptor (317 aa).

Over 1-37 (MPVQGSQRRLLGSLNSTPTAPPHLGLAANQTGARCLE) the chain is Extracellular. Residue N29 is glycosylated (N-linked (GlcNAc...) asparagine). A helical transmembrane segment spans residues 38–63 (VSIPDGLFLSLGLVSLVENVLVVTAI). The Cytoplasmic portion of the chain corresponds to 64-72 (AKNRNLHSP). Residues 73–93 (MYCFICCLALSDLLVSGSNML) traverse the membrane as a helical segment. The Extracellular portion of the chain corresponds to 94 to 118 (ETAVILLLEAGALAARAAVVQQLDN). A helical transmembrane segment spans residues 119–140 (VIDVITCSSMLSSLCFLGAIAV). The Cytoplasmic segment spans residues 141–163 (DRYISIFYALRYHSIVTLPRARR). Residues 164 to 183 (AVAAIWVASVLFSMLFIAYY) form a helical membrane-spanning segment. Residues 184–191 (DHAAVLLC) are Extracellular-facing. A helical membrane pass occupies residues 192-211 (LVVFFLAMLVLMAVLYIHML). The Cytoplasmic portion of the chain corresponds to 212–240 (VRACQHAQGIARLHKRQRPAHQGFGLKGA). Residues 241–266 (ATLTILLGIFFLCWGPFFLHLTLIVL) traverse the membrane as a helical segment. Over 267-279 (CPQHPTCSCIFKN) the chain is Extracellular. Residues 280–300 (FNLFLALIICNAIIDPLIYAF) traverse the membrane as a helical segment. The Cytoplasmic segment spans residues 301-317 (RSQELRRTLKEVLLCSW). C315 carries the S-palmitoyl cysteine lipid modification.

It belongs to the G-protein coupled receptor 1 family. In terms of assembly, interacts with MGRN1, but does not undergo MGRN1-mediated ubiquitination; this interaction competes with GNAS-binding and thus inhibits agonist-induced cAMP production. Interacts with OPN3; the interaction results in a decrease in MC1R-mediated cAMP signaling and ultimately a decrease in melanin production in melanocytes.

It localises to the cell membrane. In terms of biological role, receptor for MSH (alpha, beta and gamma) and ACTH. The activity of this receptor is mediated by G proteins which activate adenylate cyclase. Mediates melanogenesis, the production of eumelanin (black/brown) and phaeomelanin (red/yellow), via regulation of cAMP signaling in melanocytes. The protein is Melanocyte-stimulating hormone receptor (MC1R) of Cercopithecus diana (Diana monkey).